Consider the following 373-residue polypeptide: Queuine tRNA-ribosyltransferase (373 aa).

Asp-89 acts as the Proton acceptor in catalysis. Substrate contacts are provided by residues 89–93 (DSGGF), Asp-143, Gln-192, and Gly-220. An RNA binding region spans residues 251-257 (GVGTPED). Asp-270 acts as the Nucleophile in catalysis. The tract at residues 275–279 (TRNAR) is RNA binding; important for wobble base 34 recognition. 4 residues coordinate Zn(2+): Cys-308, Cys-310, Cys-313, and His-339.

This sequence belongs to the queuine tRNA-ribosyltransferase family. Homodimer. Within each dimer, one monomer is responsible for RNA recognition and catalysis, while the other monomer binds to the replacement base PreQ1. Zn(2+) serves as cofactor.

The catalysed reaction is 7-aminomethyl-7-carbaguanine + guanosine(34) in tRNA = 7-aminomethyl-7-carbaguanosine(34) in tRNA + guanine. Its pathway is tRNA modification; tRNA-queuosine biosynthesis. Catalyzes the base-exchange of a guanine (G) residue with the queuine precursor 7-aminomethyl-7-deazaguanine (PreQ1) at position 34 (anticodon wobble position) in tRNAs with GU(N) anticodons (tRNA-Asp, -Asn, -His and -Tyr). Catalysis occurs through a double-displacement mechanism. The nucleophile active site attacks the C1' of nucleotide 34 to detach the guanine base from the RNA, forming a covalent enzyme-RNA intermediate. The proton acceptor active site deprotonates the incoming PreQ1, allowing a nucleophilic attack on the C1' of the ribose to form the product. After dissociation, two additional enzymatic reactions on the tRNA convert PreQ1 to queuine (Q), resulting in the hypermodified nucleoside queuosine (7-(((4,5-cis-dihydroxy-2-cyclopenten-1-yl)amino)methyl)-7-deazaguanosine). This Aliarcobacter butzleri (strain RM4018) (Arcobacter butzleri) protein is Queuine tRNA-ribosyltransferase.